The following is a 248-amino-acid chain: Pathogenesis-related thaumatin-like protein 3.4 (248 aa).

A signal peptide spans 1–25 (MARAILWVLLTVMAVSLLLHAGVEG). Intrachain disulfides connect Cys34-Cys227, Cys75-Cys85, Cys90-Cys96, Cys141-Cys216, Cys146-Cys199, Cys154-Cys164, Cys168-Cys177, and Cys178-Cys186. Residue Asn235 is glycosylated (N-linked (GlcNAc...) asparagine).

This sequence belongs to the thaumatin family. Mainly expressed in male and female strobili, and, at lower levels, in roots of seedlings and saplings.

In terms of biological role, may be involved in disease resistance. This Cryptomeria japonica (Japanese cedar) protein is Pathogenesis-related thaumatin-like protein 3.4.